A 283-amino-acid chain; its full sequence is Putative S-adenosyl-L-methionine-dependent methyltransferase SAV_474/SAV474 (283 aa).

S-adenosyl-L-methionine is bound by residues Asp121 and 150-151; that span reads DL. Positions 258-283 are disordered; that stretch reads AAYGRPISTPPQREERPGGLISAVRR.

This sequence belongs to the UPF0677 family.

Functionally, exhibits S-adenosyl-L-methionine-dependent methyltransferase activity. The protein is Putative S-adenosyl-L-methionine-dependent methyltransferase SAV_474/SAV474 of Streptomyces avermitilis (strain ATCC 31267 / DSM 46492 / JCM 5070 / NBRC 14893 / NCIMB 12804 / NRRL 8165 / MA-4680).